Here is an 807-residue protein sequence, read N- to C-terminus: MAALSSGSSAEGASLFNGDMEPEPPPPVLGACYAGSGGGDPAIPEEVWNIKQMIKLTQEHIEALLDKFGGEHNPPSIYLEAYEEYTSKLDALQQREQQLLESMGNGTDFSVSSSASTDTVASSSSSSLSVAPSSLSVYQNPTDMSRNNPKSPQKPIVRVFLPNKQRTVVPARCGVTVRDSLKKALMMRGLIPECCAVYRIQDGEKKPIGWDTDISWLTGEELHVEVLENVPLTTHNFVRKTFFTLAFCDFCRKLLFQGFRCQTCGYKFHQRCSTEVPLMCVNYDQLDLLFVSKFFEHHPISQEETTLGETTPASGSYPSVPPSDSVGPPILPSPSPSKSIPIPQPFRPADEDHRNQFGQRDRSSSAPNVHINTIEPVNIDDLIRDQGVRGEGAPLNQLMRCLRKYQSRTPSPLLHSVPSEIVFDFEPGPVFRGSTAGLSATPPASLPGSLTNVKALQKSPGPQRERKSSSSSEDRNRMKTLGRRDSSDDWEIPDGQITVGQRIGSGSFGTVYKGKWHGDVAVKMLNVTAPTPQQLQAFKNEVGVLRKTRHVNILLFMGYSTKPQLAIVTQWCEGSSLYHHLHIIETKFEMIKLIDIARQTAQGMDYLHAKSIIHRDLKSNNIFLHEDLTVKIGDFGLATVKSRWSGSHQFEQLSGSILWMAPEVIRMQDKNPYSFQSDVYAFGIVLYELMTGQLPYSNINNRDQIIFMVGRGYLSPDLSKVRSNCPKAMKRLMAECLKKKRDERPLFPQILASIELLARSLPKIHRSASEPSLNRAGFQTEDFSLYACASPKTPIQAGGYGEFAAFK.

2 stretches are compositionally biased toward low complexity: residues 1–15 (MAAL…GASL) and 110–128 (SVSS…SSSL). Disordered stretches follow at residues 1 to 36 (MAAL…YAGS) and 104 to 128 (GNGT…SSSL). Residues 155–227 (PIVRVFLPNK…TGEELHVEVL (73 aa)) enclose the RBD domain. The segment at 234 to 280 (THNFVRKTFFTLAFCDFCRKLLFQGFRCQTCGYKFHQRCSTEVPLMC) adopts a Phorbol-ester/DAG-type zinc-finger fold. The Zn(2+) site is built by H235, C248, C251, C261, C264, H269, C272, and C280. The span at 303–313 (EETTLGETTPA) shows a compositional bias: polar residues. 2 disordered regions span residues 303-372 (EETT…VHIN) and 434-494 (STAG…EIPD). Residues 314–328 (SGSYPSVPPSDSVGP) are compositionally biased toward low complexity. Composition is skewed to basic and acidic residues over residues 348 to 363 (PADE…RDRS) and 463 to 487 (QRER…RDSS). A Protein kinase domain is found at 497–757 (ITVGQRIGSG…PQILASIELL (261 aa)). ATP contacts are provided by residues 503–511 (IGSGSFGTV) and K523. D616 (proton acceptor) is an active-site residue. A Phosphoserine; by MAPK1 modification is found at S790. The residue at position 793 (T793) is a Phosphothreonine; by MAPK1.

The protein belongs to the protein kinase superfamily. TKL Ser/Thr protein kinase family. RAF subfamily. The cofactor is Zn(2+). Post-translationally, phosphorylated. As to expression, expressed preferentially in neural tissue.

It localises to the nucleus. It is found in the cytoplasm. The protein resides in the cell membrane. It carries out the reaction L-seryl-[protein] + ATP = O-phospho-L-seryl-[protein] + ADP + H(+). The catalysed reaction is L-threonyl-[protein] + ATP = O-phospho-L-threonyl-[protein] + ADP + H(+). Its activity is regulated as follows. In quiescent cells, maintained in an inactive state via an intramolecular interaction between the protein kinase and N-terminal domains. Following mitogen-mediated cell activation, binds via its RGB domain to active HRAS (GTP-bound) which releases the inhibitory intramolecular interaction between the two domains. This allows the MAP2K1-mediated dimerization of KSR1 or KSR2, and BRAF which activates BRAF. Its function is as follows. Protein kinase involved in the activation of the MAP signaling cascade. May play a role in transducing specific signals in neural cells. The protein is Serine/threonine-protein kinase B-raf of Coturnix japonica (Japanese quail).